Here is a 396-residue protein sequence, read N- to C-terminus: Elongation factor Tu (396 aa).

The 197-residue stretch at K10 to E206 folds into the tr-type G domain. A G1 region spans residues G19 to T26. Residue G19–T26 participates in GTP binding. T26 contacts Mg(2+). The interval G60–N64 is G2. The segment at D81–G84 is G3. Residues D81–H85 and N136–D139 each bind GTP. The G4 stretch occupies residues N136–D139. The segment at S174–K176 is G5.

The protein belongs to the TRAFAC class translation factor GTPase superfamily. Classic translation factor GTPase family. EF-Tu/EF-1A subfamily. Monomer.

Its subcellular location is the cytoplasm. It catalyses the reaction GTP + H2O = GDP + phosphate + H(+). GTP hydrolase that promotes the GTP-dependent binding of aminoacyl-tRNA to the A-site of ribosomes during protein biosynthesis. This Cupriavidus necator (strain ATCC 17699 / DSM 428 / KCTC 22496 / NCIMB 10442 / H16 / Stanier 337) (Ralstonia eutropha) protein is Elongation factor Tu.